A 391-amino-acid chain; its full sequence is Ferrochelatase (391 aa).

Fe cation contacts are provided by H196 and E281.

It belongs to the ferrochelatase family.

The protein localises to the cytoplasm. The enzyme catalyses heme b + 2 H(+) = protoporphyrin IX + Fe(2+). It functions in the pathway porphyrin-containing compound metabolism; protoheme biosynthesis; protoheme from protoporphyrin-IX: step 1/1. Catalyzes the ferrous insertion into protoporphyrin IX. This chain is Ferrochelatase, found in Prochlorococcus marinus (strain MIT 9515).